The following is a 379-amino-acid chain: Homoserine O-succinyltransferase (379 aa).

The region spanning N51–L360 is the AB hydrolase-1 domain. S157 (nucleophile) is an active-site residue. Position 227 (R227) interacts with substrate. Residues D323 and H356 contribute to the active site. Residue D357 participates in substrate binding.

It belongs to the AB hydrolase superfamily. MetX family. As to quaternary structure, homodimer.

It localises to the cytoplasm. The catalysed reaction is L-homoserine + succinyl-CoA = O-succinyl-L-homoserine + CoA. Its pathway is amino-acid biosynthesis; L-methionine biosynthesis via de novo pathway; O-succinyl-L-homoserine from L-homoserine: step 1/1. Transfers a succinyl group from succinyl-CoA to L-homoserine, forming succinyl-L-homoserine. The chain is Homoserine O-succinyltransferase from Pseudomonas putida (strain ATCC 700007 / DSM 6899 / JCM 31910 / BCRC 17059 / LMG 24140 / F1).